We begin with the raw amino-acid sequence, 591 residues long: L-fucose isomerase (591 aa).

Residues E337 and D361 each act as proton acceptor in the active site. Mn(2+) contacts are provided by E337, D361, and H528.

Belongs to the L-fucose isomerase family. Homohexamer. Mn(2+) is required as a cofactor.

Its subcellular location is the cytoplasm. It catalyses the reaction L-fucose = L-fuculose. It functions in the pathway carbohydrate degradation; L-fucose degradation; L-lactaldehyde and glycerone phosphate from L-fucose: step 1/3. Its function is as follows. Converts the aldose L-fucose into the corresponding ketose L-fuculose. This Escherichia coli O157:H7 (strain EC4115 / EHEC) protein is L-fucose isomerase.